The sequence spans 442 residues: Septin-8 (442 aa).

Residues 1–16 are compositionally biased toward basic and acidic residues; it reads MAATDLERVSSAEPEP. Positions 1-23 are disordered; sequence MAATDLERVSSAEPEPRSLSLGG. Alanine 2 is subject to N-acetylalanine. The residue at position 10 (serine 10) is a Phosphoserine. The 267-residue stretch at 41–307 folds into the Septin-type G domain; sequence QGFSFNILCV…ELYRRCKLEE (267 aa). Residues 51–58 are G1 motif; it reads GETGIGKS. Residues 51-58, glycine 106, 187-195, glycine 241, and arginine 256 each bind GTP; these read GETGIGKS and KADTISKSE. Residues 103 to 106 form a G3 motif region; the sequence is DAVG. The segment at 186–189 is G4 motif; it reads AKAD. The stretch at 322 to 410 forms a coiled coil; the sequence is LQETYEAKRK…RKAAVEALQS (89 aa). Residues 377-391 are compositionally biased toward basic and acidic residues; the sequence is HQEEKRKVEEKRREL. The interval 377 to 442 is disordered; that stretch reads HQEEKRKVEE…WSSIYSVTIP (66 aa). Polar residues-rich tracts occupy residues 408-420 and 432-442; these read LQSQ…SQQP and GWSSIYSVTIP.

It belongs to the TRAFAC class TrmE-Era-EngA-EngB-Septin-like GTPase superfamily. Septin GTPase family. In terms of assembly, septins polymerize into heterooligomeric protein complexes that form filaments, and can associate with cellular membranes, actin filaments and microtubules. GTPase activity is required for filament formation. Interacts with CDK14, SEPTIN4, SEPTIN5 and SEPTIN7. Interacts with VAMP2; the interaction inhibits interaction of VAMP2 with SYP. Interacts with STX1A.

The protein resides in the cytoplasm. It localises to the cytoskeleton. The protein localises to the synapse. It is found in the cell projection. Its subcellular location is the axon. The protein resides in the cytoplasmic vesicle. It localises to the secretory vesicle. The protein localises to the synaptic vesicle membrane. It is found in the presynapse. In terms of biological role, filament-forming cytoskeletal GTPase. May play a role in platelet secretion. Seems to participate in the process of SNARE complex formation in synaptic vesicles. The chain is Septin-8 from Otolemur garnettii (Small-eared galago).